A 290-amino-acid chain; its full sequence is MSISNYRLQTRVRLQPLVLFQIIAAYERRPKTAKMAVGTLLGRRDRCNDIIEITNSYTVQHKEQQIGDMEQFKLDTQYASEMFELNQVTYPQEKIIGWYCTGKTLSRSAAALHGYYSRECGDMQPLHLLVDTSLRGGRLTTRLYCAVTMGVPGGTRGLLFTLLPLLKVNAEGDEAVALRLMQKQALHPTKQLGRMLPELVHVMEATRELEQKLDLVMRYINDVLTRKRRPDNSIGRALHDALTSVPLLDADSFRAMFNANVRNMLMSITLSSMIKTQMELSEKLSYLPDH.

The 139-residue stretch at Val-12 to Gly-150 folds into the MPN domain.

The protein belongs to the eIF-3 subunit F family. In terms of assembly, component of the eukaryotic translation initiation factor 3 (eIF-3) complex. The eIF-3 complex interacts with pix.

The protein localises to the cytoplasm. Component of the eukaryotic translation initiation factor 3 (eIF-3) complex, which is involved in protein synthesis of a specialized repertoire of mRNAs and, together with other initiation factors, stimulates binding of mRNA and methionyl-tRNAi to the 40S ribosome. The eIF-3 complex specifically targets and initiates translation of a subset of mRNAs involved in cell proliferation. This is Eukaryotic translation initiation factor 3 subunit F-2 from Drosophila mojavensis (Fruit fly).